The chain runs to 306 residues: LysM and putative peptidoglycan-binding domain-containing protein 3 (306 aa).

At 1-217 (MAGRHQNRSF…PYYGADWGIG (217 aa)) the chain is on the extracellular side. The N-linked (GlcNAc...) asparagine glycan is linked to Asn-7. A Phosphoserine modification is found at Ser-55. One can recognise a LysM domain in the interval 65 to 109 (LTKDIQEGDTLNAIALQYCCTVADIKRVNNLISDQDFFALRSIKI). A helical membrane pass occupies residues 218–238 (WWTAVVIMLIVGIITPVFYLL). Over 239 to 306 (YYEILAKVDV…SQSPAAQQET (68 aa)) the chain is Cytoplasmic.

It is found in the cell membrane. The protein resides in the golgi apparatus. Functionally, essential for Golgi structural integrity. This Homo sapiens (Human) protein is LysM and putative peptidoglycan-binding domain-containing protein 3 (LYSMD3).